Here is a 242-residue protein sequence, read N- to C-terminus: N-glycosylase/DNA lyase (242 aa).

8-oxoguanine contacts are provided by glutamine 26, serine 53, and tryptophan 64. Residues 120-184 (EGYYKNMKML…EDLRIKSVTS (65 aa)) are helix-hairpin-helix. The active-site Schiff-base intermediate with DNA is lysine 144. 2 residues coordinate 8-oxoguanine: phenylalanine 148 and proline 174. Aspartate 176 is a catalytic residue. 8-oxoguanine is bound by residues aspartate 210 and tryptophan 214.

Belongs to the archaeal N-glycosylase/DNA lyase (AGOG) family.

It carries out the reaction 2'-deoxyribonucleotide-(2'-deoxyribose 5'-phosphate)-2'-deoxyribonucleotide-DNA = a 3'-end 2'-deoxyribonucleotide-(2,3-dehydro-2,3-deoxyribose 5'-phosphate)-DNA + a 5'-end 5'-phospho-2'-deoxyribonucleoside-DNA + H(+). Functionally, DNA repair enzyme that is part of the base excision repair (BER) pathway; protects from oxidative damage by removing the major product of DNA oxidation, 8-oxoguanine (GO), from single- and double-stranded DNA substrates. This chain is N-glycosylase/DNA lyase, found in Pyrococcus furiosus (strain ATCC 43587 / DSM 3638 / JCM 8422 / Vc1).